A 357-amino-acid polypeptide reads, in one-letter code: MTDRKNGLTYADAGVDIDAGNRLVDLIKPMVRATARPGADAEIGGFGGLFDLKAAGFKDPVLVAATDGVGTKVKIAIEAGLHAGIGIDLVAMSVNDLVVQGAEPLFFLDYFACGKLDPVATAAIVAGIAEGCRDSGCALIGGETAEMPGLYTDGDYDLAGFAVGAAERGTLLPGKDIAAGDAVIGLASSGVHSNGFSLVRKIVERSGLGYDANAPFSPVMTLGGALLAPTKLYVKSCLRAIRETGAVKGLAHITGGGFTDNIPRVLPPHLGVGIDLPRLPVLPVFKWLAEQGEIAELELLRTFNCGIGMIAIVRADAVEQVSDILTEAGETVCLLGEVIEAKGEHRVVYSGHLDLAW.

It belongs to the AIR synthase family.

The protein resides in the cytoplasm. The enzyme catalyses 2-formamido-N(1)-(5-O-phospho-beta-D-ribosyl)acetamidine + ATP = 5-amino-1-(5-phospho-beta-D-ribosyl)imidazole + ADP + phosphate + H(+). It participates in purine metabolism; IMP biosynthesis via de novo pathway; 5-amino-1-(5-phospho-D-ribosyl)imidazole from N(2)-formyl-N(1)-(5-phospho-D-ribosyl)glycinamide: step 2/2. This Rhodopseudomonas palustris (strain BisB18) protein is Phosphoribosylformylglycinamidine cyclo-ligase.